Here is a 411-residue protein sequence, read N- to C-terminus: Tyrosine--tRNA ligase (411 aa).

The 'HIGH' region signature appears at Pro-48–His-57. Residues Lys-232–Ser-236 carry the 'KMSKS' region motif. Lys-235 contacts ATP. The 63-residue stretch at Val-347–Phe-409 folds into the S4 RNA-binding domain.

Belongs to the class-I aminoacyl-tRNA synthetase family. TyrS type 2 subfamily. Homodimer.

It localises to the cytoplasm. The catalysed reaction is tRNA(Tyr) + L-tyrosine + ATP = L-tyrosyl-tRNA(Tyr) + AMP + diphosphate + H(+). In terms of biological role, catalyzes the attachment of tyrosine to tRNA(Tyr) in a two-step reaction: tyrosine is first activated by ATP to form Tyr-AMP and then transferred to the acceptor end of tRNA(Tyr). This is Tyrosine--tRNA ligase from Carboxydothermus hydrogenoformans (strain ATCC BAA-161 / DSM 6008 / Z-2901).